The sequence spans 157 residues: 2-C-methyl-D-erythritol 2,4-cyclodiphosphate synthase (157 aa).

Residues Asp-8 and His-10 each contribute to the a divalent metal cation site. 4-CDP-2-C-methyl-D-erythritol 2-phosphate-binding positions include Asp-8–His-10 and His-34–Ser-35. His-42 is an a divalent metal cation binding site. 4-CDP-2-C-methyl-D-erythritol 2-phosphate-binding positions include Asp-56 to Gly-58, Phe-61 to Asp-65, Ala-100 to Ala-106, Thr-132 to Glu-135, Phe-139, and Arg-142.

This sequence belongs to the IspF family. As to quaternary structure, homotrimer. Requires a divalent metal cation as cofactor.

It catalyses the reaction 4-CDP-2-C-methyl-D-erythritol 2-phosphate = 2-C-methyl-D-erythritol 2,4-cyclic diphosphate + CMP. Its pathway is isoprenoid biosynthesis; isopentenyl diphosphate biosynthesis via DXP pathway; isopentenyl diphosphate from 1-deoxy-D-xylulose 5-phosphate: step 4/6. In terms of biological role, involved in the biosynthesis of isopentenyl diphosphate (IPP) and dimethylallyl diphosphate (DMAPP), two major building blocks of isoprenoid compounds. Catalyzes the conversion of 4-diphosphocytidyl-2-C-methyl-D-erythritol 2-phosphate (CDP-ME2P) to 2-C-methyl-D-erythritol 2,4-cyclodiphosphate (ME-CPP) with a corresponding release of cytidine 5-monophosphate (CMP). This Pseudomonas aeruginosa (strain ATCC 15692 / DSM 22644 / CIP 104116 / JCM 14847 / LMG 12228 / 1C / PRS 101 / PAO1) protein is 2-C-methyl-D-erythritol 2,4-cyclodiphosphate synthase.